A 408-amino-acid polypeptide reads, in one-letter code: Flavohemoprotein (408 aa).

A Globin domain is found at 1–138; sequence MLSEKTIRIV…LADIFIGREG (138 aa). Residue H85 coordinates heme b. Catalysis depends on charge relay system residues Y95 and E137. Residues 149–408 are reductase; that stretch reads GGWNGTRTFV…FGPKEELVAV (260 aa). The 112-residue stretch at 152–263 folds into the FAD-binding FR-type domain; that stretch reads NGTRTFVVTK…GPPCGEFTVD (112 aa). Residues Y190 and 205–208 each bind FAD; that span reads RNYS. Residue 277-282 coordinates NADP(+); it reads GIGVTP. Residue 398-401 participates in FAD binding; sequence FFGP.

This sequence belongs to the globin family. Two-domain flavohemoproteins subfamily. The protein in the C-terminal section; belongs to the flavoprotein pyridine nucleotide cytochrome reductase family. Requires heme b as cofactor. FAD is required as a cofactor.

It carries out the reaction 2 nitric oxide + NADPH + 2 O2 = 2 nitrate + NADP(+) + H(+). The enzyme catalyses 2 nitric oxide + NADH + 2 O2 = 2 nitrate + NAD(+) + H(+). The polypeptide is Flavohemoprotein (Rhodopirellula baltica (strain DSM 10527 / NCIMB 13988 / SH1)).